Consider the following 771-residue polypeptide: Hyperosmolality-gated Ca2+ permeable channel 1.3 (771 aa).

The chain crosses the membrane as a helical span at residues 7-27 (IGVAAAINILTAIIFLLAFAI). S54 is modified (phosphoserine). 9 helical membrane passes run 101 to 121 (IYLI…SILV), 158 to 178 (FWTH…VLMK), 375 to 395 (LIMH…IAFV), 427 to 447 (FLPG…LMVM), 467 to 487 (YYIF…SAFE), 512 to 532 (ATFF…GEIL), 584 to 604 (PVTP…YLVF), 630 to 650 (IISA…TKGA), and 651 to 671 (AQST…HRYC). The disordered stretch occupies residues 744–771 (VPTKRQSRINTPAVSHASRGSSRSPPSK). A compositionally biased stretch (polar residues) spans 751–771 (RINTPAVSHASRGSSRSPPSK).

Belongs to the CSC1 (TC 1.A.17) family. Post-translationally, phosphorylated at Ser-54 by BIK1 in response to pathogen-associated molecular pattern (PAMP) perception, promoting its activation. Preferentially expressed in guard cells.

Its subcellular location is the cell membrane. The catalysed reaction is Ca(2+)(in) = Ca(2+)(out). Activated following phosphorylation at Ser-54 by BIK1. Its function is as follows. Calcium-permeable channel that plays a key role in plant stomatal immunity. In response to pathogen-associated molecular pattern (PAMP) perception, phosphorylated and activated by BIK1, triggering rapid influx of calcium ions across the plasma membrane, leading to stomatal closure. The chain is Hyperosmolality-gated Ca2+ permeable channel 1.3 from Arabidopsis thaliana (Mouse-ear cress).